Consider the following 126-residue polypeptide: Large ribosomal subunit protein bL20c (126 aa).

The protein belongs to the bacterial ribosomal protein bL20 family.

It is found in the plastid. The protein localises to the chloroplast. Functionally, binds directly to 23S ribosomal RNA and is necessary for the in vitro assembly process of the 50S ribosomal subunit. It is not involved in the protein synthesizing functions of that subunit. This is Large ribosomal subunit protein bL20c from Pelargonium hortorum (Common geranium).